The primary structure comprises 217 residues: Small ribosomal subunit protein uS3 (217 aa).

One can recognise a KH type-2 domain in the interval 24 to 93 (IKEFLEYKLS…NPQIDVIDVS (70 aa)).

This sequence belongs to the universal ribosomal protein uS3 family. As to quaternary structure, part of the 30S ribosomal subunit.

Its function is as follows. Binds the lower part of the 30S subunit head. The chain is Small ribosomal subunit protein uS3 from Pyrobaculum islandicum (strain DSM 4184 / JCM 9189 / GEO3).